The following is a 347-amino-acid chain: Phenylalanine--tRNA ligase alpha subunit (347 aa).

Glu261 contacts Mg(2+).

Belongs to the class-II aminoacyl-tRNA synthetase family. Phe-tRNA synthetase alpha subunit type 1 subfamily. As to quaternary structure, tetramer of two alpha and two beta subunits. Mg(2+) serves as cofactor.

Its subcellular location is the cytoplasm. It carries out the reaction tRNA(Phe) + L-phenylalanine + ATP = L-phenylalanyl-tRNA(Phe) + AMP + diphosphate + H(+). This chain is Phenylalanine--tRNA ligase alpha subunit, found in Streptococcus uberis (strain ATCC BAA-854 / 0140J).